Reading from the N-terminus, the 218-residue chain is Large ribosomal subunit protein uL3 (218 aa).

Disordered stretches follow at residues 128–167 (FSRGPMSHGSKNHRLPGSIGAGTTPGRVYPGKRMAGRMGG) and 199–218 (SLLNIRPAKRVGAPTQQGGK).

This sequence belongs to the universal ribosomal protein uL3 family. Part of the 50S ribosomal subunit. Forms a cluster with proteins L14 and L19.

Functionally, one of the primary rRNA binding proteins, it binds directly near the 3'-end of the 23S rRNA, where it nucleates assembly of the 50S subunit. This is Large ribosomal subunit protein uL3 from Prochlorococcus marinus (strain NATL2A).